Consider the following 35-residue polypeptide: MTERKLLQLLRRPFISLSLFTALRACPLRPKSLIA.

A signal peptide spans 1–25 (MTERKLLQLLRRPFISLSLFTALRA).

This is an uncharacterized protein from Saccharomyces cerevisiae (strain ATCC 204508 / S288c) (Baker's yeast).